The following is a 268-amino-acid chain: Cytochrome b-c1 complex subunit Rieske-5, mitochondrial (268 aa).

The transit peptide at 1 to 56 directs the protein to the mitochondrion; the sequence is MLRIAGRKLSSSAAARSSSAFFTRNPFTFTDDSSSPTRSPSPTSLASQFLDQFRGF. Residues 57 to 105 are Mitochondrial matrix-facing; that stretch reads SSNSVSPAHQTGLVSDLPATVAAIKNPSSKIVYDDSNHERYPPGDPSKR. Residues 106 to 128 traverse the membrane as a helical segment; the sequence is AFAYFVLTGGRFVYASLVRLLIL. The Mitochondrial intermembrane segment spans residues 129-268; the sequence is KFVLSMSASK…FMEENKLLIG (140 aa). Positions 178-266 constitute a Rieske domain; it reads INLANSVDLG…YSFMEENKLL (89 aa). Cys-211, His-213, Cys-230, and His-233 together coordinate [2Fe-2S] cluster. A disulfide bond links Cys-216 and Cys-232.

The protein belongs to the Rieske iron-sulfur protein family. Component of the ubiquinol-cytochrome c oxidoreductase (cytochrome b-c1 complex, complex III, CIII), a multisubunit enzyme composed of 3 respiratory subunits cytochrome b, cytochrome c1 and Rieske protein, 2 core protein subunits, and several low-molecular weight protein subunits. The complex exists as an obligatory dimer and forms supercomplexes (SCs) in the inner mitochondrial membrane with cytochrome c oxidase (complex IV, CIV). [2Fe-2S] cluster is required as a cofactor. As to expression, high levels are seen in the flowers while a low level expression is seen in the roots, leaves and stems.

The protein resides in the mitochondrion inner membrane. It carries out the reaction a quinol + 2 Fe(III)-[cytochrome c](out) = a quinone + 2 Fe(II)-[cytochrome c](out) + 2 H(+)(out). Component of the ubiquinol-cytochrome c oxidoreductase, a multisubunit transmembrane complex that is part of the mitochondrial electron transport chain which drives oxidative phosphorylation. The respiratory chain contains 3 multisubunit complexes succinate dehydrogenase (complex II, CII), ubiquinol-cytochrome c oxidoreductase (cytochrome b-c1 complex, complex III, CIII) and cytochrome c oxidase (complex IV, CIV), that cooperate to transfer electrons derived from NADH and succinate to molecular oxygen, creating an electrochemical gradient over the inner membrane that drives transmembrane transport and the ATP synthase. The cytochrome b-c1 complex catalyzes electron transfer from ubiquinol to cytochrome c, linking this redox reaction to translocation of protons across the mitochondrial inner membrane, with protons being carried across the membrane as hydrogens on the quinol. In the process called Q cycle, 2 protons are consumed from the matrix, 4 protons are released into the intermembrane space and 2 electrons are passed to cytochrome c. The Rieske protein is a catalytic core subunit containing a [2Fe-2S] iron-sulfur cluster. It cycles between 2 conformational states during catalysis to transfer electrons from the quinol bound in the Q(0) site in cytochrome b to cytochrome c1. The protein is Cytochrome b-c1 complex subunit Rieske-5, mitochondrial of Nicotiana tabacum (Common tobacco).